The following is a 189-amino-acid chain: Phosphoheptose isomerase (189 aa).

The SIS domain occupies 34-189 (LVEAFRKGNK…CDLVEKALFA (156 aa)). Position 49 to 51 (49 to 51 (NGG)) interacts with substrate. The Zn(2+) site is built by histidine 58 and glutamate 62. Substrate is bound by residues glutamate 62, 91–92 (ND), 117–119 (STS), serine 122, and glutamine 169. Zn(2+) is bound by residues glutamine 169 and histidine 177.

Belongs to the SIS family. GmhA subfamily. Homotetramer. Zn(2+) is required as a cofactor.

The protein resides in the cytoplasm. It catalyses the reaction 2 D-sedoheptulose 7-phosphate = D-glycero-alpha-D-manno-heptose 7-phosphate + D-glycero-beta-D-manno-heptose 7-phosphate. The protein operates within carbohydrate biosynthesis; D-glycero-D-manno-heptose 7-phosphate biosynthesis; D-glycero-alpha-D-manno-heptose 7-phosphate and D-glycero-beta-D-manno-heptose 7-phosphate from sedoheptulose 7-phosphate: step 1/1. Catalyzes the isomerization of sedoheptulose 7-phosphate in D-glycero-D-manno-heptose 7-phosphate. This chain is Phosphoheptose isomerase, found in Pelobacter propionicus (strain DSM 2379 / NBRC 103807 / OttBd1).